Here is a 493-residue protein sequence, read N- to C-terminus: DM7 family protein GM11958 (493 aa).

A disordered region spans residues 434–493; the sequence is ATKSTDTRDDGMNTADYQSQFPELEQDSEPEPEPEPEPQTEDEGEDEDIEILASLCSGSI. Residues 457-483 show a composition bias toward acidic residues; that stretch reads LEQDSEPEPEPEPEPQTEDEGEDEDIE.

The protein belongs to the DM7 family.

The protein is DM7 family protein GM11958 of Drosophila sechellia (Fruit fly).